Here is a 149-residue protein sequence, read N- to C-terminus: UPF0310 protein msl3206 (149 aa).

It belongs to the UPF0310 family.

This chain is UPF0310 protein msl3206, found in Mesorhizobium japonicum (strain LMG 29417 / CECT 9101 / MAFF 303099) (Mesorhizobium loti (strain MAFF 303099)).